Reading from the N-terminus, the 145-residue chain is Oleosin L (145 aa).

Residue Ala2 is modified to N-acetylalanine. 2 helical membrane-spanning segments follow: residues 36–56 and 59–79; these read GSLL…LTIA and LLVI…LLGA. The short motif at 58–69 is the Proline-knot element; it reads PLLVIFSPVLVP. The segment covering 123–132 has biased composition (basic and acidic residues); sequence KAREMKDRAE. The segment at 123-145 is disordered; that stretch reads KAREMKDRAEQFSQQPVAGSQTS. Over residues 133-145 the composition is skewed to polar residues; sequence QFSQQPVAGSQTS.

It belongs to the oleosin family. Expressed in seeds (at protein level).

It is found in the lipid droplet. It localises to the membrane. In terms of biological role, may have a structural role to stabilize the lipid body during desiccation of the seed by preventing coalescence of the oil. Probably interacts with both lipid and phospholipid moieties of lipid bodies. May also provide recognition signals for specific lipase anchorage in lipolysis during seedling growth. The sequence is that of Oleosin L from Sesamum indicum (Oriental sesame).